A 360-amino-acid polypeptide reads, in one-letter code: Heat-inducible transcription repressor HrcA (360 aa).

Belongs to the HrcA family.

Its function is as follows. Negative regulator of class I heat shock genes (grpE-dnaK-dnaJ and groELS operons). Prevents heat-shock induction of these operons. The polypeptide is Heat-inducible transcription repressor HrcA (Gloeobacter violaceus (strain ATCC 29082 / PCC 7421)).